Reading from the N-terminus, the 223-residue chain is Cytidylate kinase (223 aa).

10 to 18 (GPAGAGKST) lines the ATP pocket.

It belongs to the cytidylate kinase family. Type 1 subfamily.

It localises to the cytoplasm. The enzyme catalyses CMP + ATP = CDP + ADP. The catalysed reaction is dCMP + ATP = dCDP + ADP. This Exiguobacterium sibiricum (strain DSM 17290 / CCUG 55495 / CIP 109462 / JCM 13490 / 255-15) protein is Cytidylate kinase.